The following is a 633-amino-acid chain: Probable extracellular metalloproteinase 3 (633 aa).

Residues 1–18 (MHGLLLAGLLALPMNVLA) form the signal peptide. Residues 19-246 (HPAEQHASNV…VHNVVDYVAS (228 aa)) constitute a propeptide that is removed on maturation. Asn-410 carries N-linked (GlcNAc...) asparagine glycosylation. His-429 serves as a coordination point for Zn(2+). The active site involves Glu-430. Position 433 (His-433) interacts with Zn(2+). Asn-480 and Asn-622 each carry an N-linked (GlcNAc...) asparagine glycan.

Belongs to the peptidase M36 family. The cofactor is Zn(2+).

It localises to the secreted. Functionally, secreted metalloproteinase probably acting as a virulence factor. In Trichophyton verrucosum (strain HKI 0517), this protein is Probable extracellular metalloproteinase 3 (MEP3).